The following is a 305-amino-acid chain: Homoserine O-acetyltransferase (305 aa).

Cys-142 (acyl-thioester intermediate) is an active-site residue. Substrate-binding residues include Lys-163 and Ser-192. Residue His-235 is the Proton acceptor of the active site. Glu-237 is an active-site residue. Arg-249 serves as a coordination point for substrate.

This sequence belongs to the MetA family.

Its subcellular location is the cytoplasm. It catalyses the reaction L-homoserine + acetyl-CoA = O-acetyl-L-homoserine + CoA. Its pathway is amino-acid biosynthesis; L-methionine biosynthesis via de novo pathway; O-acetyl-L-homoserine from L-homoserine: step 1/1. Its function is as follows. Transfers an acetyl group from acetyl-CoA to L-homoserine, forming acetyl-L-homoserine. The polypeptide is Homoserine O-acetyltransferase (Bacteroides fragilis (strain ATCC 25285 / DSM 2151 / CCUG 4856 / JCM 11019 / LMG 10263 / NCTC 9343 / Onslow / VPI 2553 / EN-2)).